A 387-amino-acid chain; its full sequence is Eukaryotic translation initiation factor 3 subunit M (387 aa).

The 160-residue stretch at 181–340 (LSSKVMIELL…RKVHISSTMH (160 aa)) folds into the PCI domain.

Belongs to the eIF-3 subunit M family. In terms of assembly, component of the eukaryotic translation initiation factor 3 (eIF-3) complex. The eIF-3 complex interacts with pix.

Its subcellular location is the cytoplasm. It localises to the golgi apparatus. In terms of biological role, component of the eukaryotic translation initiation factor 3 (eIF-3) complex, which is involved in protein synthesis of a specialized repertoire of mRNAs and, together with other initiation factors, stimulates binding of mRNA and methionyl-tRNAi to the 40S ribosome. The eIF-3 complex specifically targets and initiates translation of a subset of mRNAs involved in cell proliferation. The sequence is that of Eukaryotic translation initiation factor 3 subunit M from Drosophila grimshawi (Hawaiian fruit fly).